The chain runs to 168 residues: Photosystem I assembly protein Ycf3 (168 aa).

TPR repeat units lie at residues 35–68 (AFTY…EIDP), 72–105 (SYIL…NPFL), and 120–153 (GEQA…TPGN).

The protein belongs to the Ycf3 family.

The protein resides in the plastid. The protein localises to the chloroplast thylakoid membrane. Essential for the assembly of the photosystem I (PSI) complex. May act as a chaperone-like factor to guide the assembly of the PSI subunits. The chain is Photosystem I assembly protein Ycf3 from Ranunculus macranthus (Large buttercup).